The following is a 219-amino-acid chain: Cytidylate kinase (219 aa).

An ATP-binding site is contributed by 21-29 (GPAASGKGT).

Belongs to the cytidylate kinase family. Type 1 subfamily.

The protein resides in the cytoplasm. It carries out the reaction CMP + ATP = CDP + ADP. The enzyme catalyses dCMP + ATP = dCDP + ADP. This Rickettsia prowazekii (strain Madrid E) protein is Cytidylate kinase.